The sequence spans 133 residues: Small ribosomal subunit protein uS8 (133 aa).

It belongs to the universal ribosomal protein uS8 family. Part of the 30S ribosomal subunit. Contacts proteins S5 and S12.

One of the primary rRNA binding proteins, it binds directly to 16S rRNA central domain where it helps coordinate assembly of the platform of the 30S subunit. This Orientia tsutsugamushi (strain Boryong) (Rickettsia tsutsugamushi) protein is Small ribosomal subunit protein uS8.